A 757-amino-acid polypeptide reads, in one-letter code: Protein lsd90 (757 aa).

Composition is skewed to polar residues over residues 1 to 11 (MVGTINESMQN), 19 to 36 (TAQS…SSSK), 51 to 69 (TAGN…SKNL), and 94 to 118 (DTSN…STYE). Disordered stretches follow at residues 1-131 (MVGT…SRSS), 224-244 (ERAR…EKQA), 589-633 (AQAE…KSKS), and 657-757 (AYVG…MSNK). Residues 166 to 604 (DEKTLQDLLE…KVESEYNSVK (439 aa)) adopt a coiled-coil conformation. A compositionally biased stretch (basic and acidic residues) spans 589-598 (AQAEQSKVES). Residues 619–632 (VTTNEPTDVSTKSK) show a composition bias toward polar residues. The segment covering 674 to 693 (STPSTLPTSASTNAAATTTT) has biased composition (low complexity). Residue 718 to 725 (GTTGLGKS) participates in ATP binding.

Its function is as follows. May be involved in the metabolism of very long-chain fatty acid-containing phospholipids (VLCFA-PL). This is Protein lsd90 (lsd90) from Schizosaccharomyces pombe (strain 972 / ATCC 24843) (Fission yeast).